The following is a 170-amino-acid chain: Large ribosomal subunit protein uL10 (170 aa).

The protein belongs to the universal ribosomal protein uL10 family. In terms of assembly, part of the ribosomal stalk of the 50S ribosomal subunit. The N-terminus interacts with L11 and the large rRNA to form the base of the stalk. The C-terminus forms an elongated spine to which L12 dimers bind in a sequential fashion forming a multimeric L10(L12)X complex.

Functionally, forms part of the ribosomal stalk, playing a central role in the interaction of the ribosome with GTP-bound translation factors. The protein is Large ribosomal subunit protein uL10 of Nitratiruptor sp. (strain SB155-2).